A 518-amino-acid chain; its full sequence is Putative ribose/galactose/methyl galactoside import ATP-binding protein (518 aa).

The interval M1–P22 is disordered. Positions R12–P22 are enriched in polar residues. ABC transporter domains are found at residues L29–E265 and V275–L515. ATP is bound at residue G61 to S68.

Belongs to the ABC transporter superfamily. Carbohydrate importer 2 (CUT2) (TC 3.A.1.2) family.

The protein resides in the cell inner membrane. The enzyme catalyses D-ribose(out) + ATP + H2O = D-ribose(in) + ADP + phosphate + H(+). It carries out the reaction D-galactose(out) + ATP + H2O = D-galactose(in) + ADP + phosphate + H(+). Part of an ABC transporter complex involved in carbohydrate import. Could be involved in ribose, galactose and/or methyl galactoside import. Responsible for energy coupling to the transport system. The polypeptide is Putative ribose/galactose/methyl galactoside import ATP-binding protein (Ralstonia nicotianae (strain ATCC BAA-1114 / GMI1000) (Ralstonia solanacearum)).